We begin with the raw amino-acid sequence, 586 residues long: MAPVSIADLVAALPSEDSWGPATPSDNMLEGVPYAPFSKGDKLGRMADWTSDSKDRDRAGRQAYNRNYRDQQVYGAGTSSLFNVQVAEDESSFSVVDNTRTTTKRTFGRGGGTVFRGRAQRGGAGQRGGRAGFQRVGAGRGQGGDRYYDNRGGRGNRGRRSGWKDYDKPQRTREPSVNVRPDWTMLEEVDFSRLSKLNLEAPEGEDLDSYGFLYYYDRSYDKAPVKNAERRLQALDRAAYNVTTTQDPIIQELAEKNEATVFATSDILSMLMCAPRSVYSWDIVIVHQGNKIYFDKREGASIDLVTVNENAADAPLEVTDSSGKQESLNTPSALALEATFINHNFALQTVVESEDSKVGFSHPNPFYNASEETEPLASKGYKYRRFDMSLQEDEEPLNLIVRTEVDAVMKNPVSGEEQQLVVKALNEFDSKAPGSGGALDWRSKLWSQRGAVVATEMKNNSIKLARWATQAILAKADAMKLGFVSRANPRSAAGHVVLGVVSYKPRDLAAQMNLNLGNGWGIVRTIVDRIQALDANEEEDKVTKYVLIKDPNRPVLRLYSVPANTFEEDDEAADEQEEKATEESEE.

2 disordered regions span residues Glu-16–Phe-37 and Lys-104–Ser-176. Gly residues predominate over residues Gly-108–Ala-131. The span at Gly-162–Glu-174 shows a compositional bias: basic and acidic residues. Positions Ser-301–Pro-315 are RNA gate. Residues Ala-563 to Glu-586 are disordered. A compositionally biased stretch (acidic residues) spans Phe-566–Glu-577.

It belongs to the eIF-3 subunit D family. As to quaternary structure, component of the eukaryotic translation initiation factor 3 (eIF-3) complex.

It is found in the cytoplasm. MRNA cap-binding component of the eukaryotic translation initiation factor 3 (eIF-3) complex, which is involved in protein synthesis of a specialized repertoire of mRNAs and, together with other initiation factors, stimulates binding of mRNA and methionyl-tRNAi to the 40S ribosome. The eIF-3 complex specifically targets and initiates translation of a subset of mRNAs involved in cell proliferation. In the eIF-3 complex, eif3d specifically recognizes and binds the 7-methylguanosine cap of a subset of mRNAs. The polypeptide is Eukaryotic translation initiation factor 3 subunit D (Aspergillus clavatus (strain ATCC 1007 / CBS 513.65 / DSM 816 / NCTC 3887 / NRRL 1 / QM 1276 / 107)).